We begin with the raw amino-acid sequence, 899 residues long: Origin recognition complex subunit 5 (899 aa).

3 disordered regions span residues 27–47, 100–166, and 194–238; these read FSSPKKSRKESPIFVQNNDDT, DRIN…EYKD, and KNLE…DGNL. The segment covering 105-160 has biased composition (acidic residues); it reads SEEETNINDDNNDDNNGDYDDDNNSDDDDDNDDNNNNDDNNNDDDEDVDDFEDIKE. The span at 207-218 shows a compositional bias: low complexity; it reads SSDNSMTSSSEE. The span at 227-237 shows a compositional bias: basic and acidic residues; the sequence is ESDKESDKDGN. 303–310 provides a ligand contact to ATP; sequence GLPGMGKT. Residues 409 to 469 form a disordered region; it reads KRTTENIRSP…NNNSNNVRFN (61 aa). A compositionally biased stretch (low complexity) spans 455 to 469; it reads KNNFNNNNSNNVRFN.

The protein belongs to the ORC5 family. As to quaternary structure, component of the origin recognition complex (ORC). Interacts with PCNA1; the interaction occurs during the trophozoite stage but not at the late schizont stage.

It is found in the nucleus. The catalysed reaction is ATP + H2O = ADP + phosphate + H(+). Component of the origin recognition complex (ORC) that binds origins of replication. The polypeptide is Origin recognition complex subunit 5 (Plasmodium falciparum (isolate 3D7)).